The primary structure comprises 498 residues: MSEPVTLSFARLTAAPKGVLIVLTDETLAFGAQTQKLLKGADAAITRAFDAERYKGKAWSTIDLLAPAGLDAPRLVVISVGKAGELKPADFLKLGGVAAGKIPSSAREATVVLDLPGAKIGPESAAEVALGIRLRTYSFDRYKTKKKDDTERGALAMTLLVSDEAGTKRAATTADAVGDGVLFARDLVNEPANVLDPPEFARRAEEHLSSVGVEIEVLDDAGLARAGMHTLLGVGQGSIKESRVVIMRWNGGPAGEPPVAFIGKGVTFDTGGISIKPAAGMEDMKGDMGGAACVTGLMYALAARKAKVNAVGLIGLVENMPDGAAQRPGDIVTSLSGQTIEIINTDAEGRLVLCDVLWYAKEQFKPKFMIDLATLTGAILVALGSEYAGLFSNDDTLSERLTKTGQETGERVWRMPLGPEYDKLVDSKFADMKNTGGRHAGSITAAQFLQRFVDKTPWAHLDIAGTAMSSPASDINKSWGSGWGVRLLNQLVKDHYEG.

Mn(2+) is bound by residues lysine 264 and aspartate 269. Lysine 276 is a catalytic residue. Residues aspartate 287, aspartate 346, and glutamate 348 each contribute to the Mn(2+) site. Arginine 350 is an active-site residue.

The protein belongs to the peptidase M17 family. Mn(2+) serves as cofactor.

It is found in the cytoplasm. It catalyses the reaction Release of an N-terminal amino acid, Xaa-|-Yaa-, in which Xaa is preferably Leu, but may be other amino acids including Pro although not Arg or Lys, and Yaa may be Pro. Amino acid amides and methyl esters are also readily hydrolyzed, but rates on arylamides are exceedingly low.. The enzyme catalyses Release of an N-terminal amino acid, preferentially leucine, but not glutamic or aspartic acids.. Presumably involved in the processing and regular turnover of intracellular proteins. Catalyzes the removal of unsubstituted N-terminal amino acids from various peptides. This Xanthobacter autotrophicus (strain ATCC BAA-1158 / Py2) protein is Probable cytosol aminopeptidase.